Consider the following 162-residue polypeptide: Protein-export protein SecB (162 aa).

Belongs to the SecB family. Homotetramer, a dimer of dimers. One homotetramer interacts with 1 SecA dimer.

It is found in the cytoplasm. Functionally, one of the proteins required for the normal export of preproteins out of the cell cytoplasm. It is a molecular chaperone that binds to a subset of precursor proteins, maintaining them in a translocation-competent state. It also specifically binds to its receptor SecA. This chain is Protein-export protein SecB, found in Legionella pneumophila (strain Paris).